A 316-amino-acid chain; its full sequence is WSCD family member GA21586 (316 aa).

A helical membrane pass occupies residues 8 to 28 (FFGVSATIIIYIGGVLFLSMN). Residues asparagine 78, asparagine 150, asparagine 226, and asparagine 232 are each glycosylated (N-linked (GlcNAc...) asparagine).

Belongs to the WSCD family.

The protein localises to the membrane. This is WSCD family member GA21586 from Drosophila pseudoobscura pseudoobscura (Fruit fly).